A 244-amino-acid chain; its full sequence is Glucosamine-6-phosphate deaminase (244 aa).

Aspartate 67 (proton acceptor; for enolization step) is an active-site residue. Asparagine 136 functions as the For ring-opening step in the catalytic mechanism. Histidine 138 serves as the catalytic Proton acceptor; for ring-opening step. Residue glutamate 143 is the For ring-opening step of the active site.

This sequence belongs to the glucosamine/galactosamine-6-phosphate isomerase family. NagB subfamily.

It carries out the reaction alpha-D-glucosamine 6-phosphate + H2O = beta-D-fructose 6-phosphate + NH4(+). It participates in amino-sugar metabolism; N-acetylneuraminate degradation; D-fructose 6-phosphate from N-acetylneuraminate: step 5/5. In terms of biological role, catalyzes the reversible isomerization-deamination of glucosamine 6-phosphate (GlcN6P) to form fructose 6-phosphate (Fru6P) and ammonium ion. This chain is Glucosamine-6-phosphate deaminase, found in Clostridium botulinum (strain Loch Maree / Type A3).